A 691-amino-acid polypeptide reads, in one-letter code: Lipase 2 (691 aa).

An N-terminal signal peptide occupies residues 1-37; it reads MLRGQEERKYSIRKYSIGVVSVLAATMFVVSSHEAQA. Polar residues predominate over residues 34-72; that stretch reads EAQASEKTPTSNAAAQKETLNQPGEQGNAITSHQMQSGK. Residues 34–267 are disordered; sequence EAQASEKTPT…KPTDKNTDNK (234 aa). Residues 38-296 constitute a propeptide that is removed on maturation; the sequence is SEKTPTSNAA…ADAKKVRPLK (259 aa). Residues 73–82 are compositionally biased toward basic and acidic residues; the sequence is QLDDMHKENG. 3 stretches are compositionally biased toward polar residues: residues 83 to 115, 125 to 172, and 186 to 207; these read KSGT…NDNQ, SKQS…QPSI, and PTST…AQDA. Basic and acidic residues-rich tracts occupy residues 226–238 and 258–267; these read IDAK…RQSE and KPTDKNTDNK. Residue serine 413 is the Nucleophile of the active site. Ca(2+) is bound at residue glycine 580. Catalysis depends on aspartate 604, which acts as the Charge relay system. Ca(2+) is bound at residue aspartate 645. Histidine 646 (charge relay system) is an active-site residue. Residues aspartate 648, aspartate 653, and aspartate 656 each coordinate Ca(2+).

This sequence belongs to the AB hydrolase superfamily. Lipase family.

It localises to the secreted. It catalyses the reaction a triacylglycerol + H2O = a diacylglycerol + a fatty acid + H(+). The chain is Lipase 2 (lip2) from Staphylococcus aureus (strain Mu50 / ATCC 700699).